Here is a 212-residue protein sequence, read N- to C-terminus: FMN-dependent NADH:quinone oxidoreductase (212 aa).

FMN contacts are provided by residues S9, 15–17 (SVS), and 138–141 (TRGG).

Belongs to the azoreductase type 1 family. As to quaternary structure, homodimer. It depends on FMN as a cofactor.

It catalyses the reaction 2 a quinone + NADH + H(+) = 2 a 1,4-benzosemiquinone + NAD(+). The catalysed reaction is N,N-dimethyl-1,4-phenylenediamine + anthranilate + 2 NAD(+) = 2-(4-dimethylaminophenyl)diazenylbenzoate + 2 NADH + 2 H(+). Functionally, quinone reductase that provides resistance to thiol-specific stress caused by electrophilic quinones. Its function is as follows. Also exhibits azoreductase activity. Catalyzes the reductive cleavage of the azo bond in aromatic azo compounds to the corresponding amines. The protein is FMN-dependent NADH:quinone oxidoreductase of Delftia acidovorans (strain DSM 14801 / SPH-1).